A 423-amino-acid chain; its full sequence is Glutamate-1-semialdehyde 2,1-aminomutase (423 aa).

An N6-(pyridoxal phosphate)lysine modification is found at Lys-259.

It belongs to the class-III pyridoxal-phosphate-dependent aminotransferase family. HemL subfamily. In terms of assembly, homodimer. Pyridoxal 5'-phosphate serves as cofactor.

It is found in the cytoplasm. The enzyme catalyses (S)-4-amino-5-oxopentanoate = 5-aminolevulinate. Its pathway is porphyrin-containing compound metabolism; protoporphyrin-IX biosynthesis; 5-aminolevulinate from L-glutamyl-tRNA(Glu): step 2/2. The sequence is that of Glutamate-1-semialdehyde 2,1-aminomutase from Thermosipho melanesiensis (strain DSM 12029 / CIP 104789 / BI429).